The primary structure comprises 423 residues: tRNA(Ile)-lysidine synthase (423 aa).

ATP is bound at residue 18–23 (SGGADS).

Belongs to the tRNA(Ile)-lysidine synthase family.

It is found in the cytoplasm. The enzyme catalyses cytidine(34) in tRNA(Ile2) + L-lysine + ATP = lysidine(34) in tRNA(Ile2) + AMP + diphosphate + H(+). In terms of biological role, ligates lysine onto the cytidine present at position 34 of the AUA codon-specific tRNA(Ile) that contains the anticodon CAU, in an ATP-dependent manner. Cytidine is converted to lysidine, thus changing the amino acid specificity of the tRNA from methionine to isoleucine. The chain is tRNA(Ile)-lysidine synthase from Aromatoleum aromaticum (strain DSM 19018 / LMG 30748 / EbN1) (Azoarcus sp. (strain EbN1)).